Here is a 103-residue protein sequence, read N- to C-terminus: UPF0145 protein BCE_1095 (103 aa).

Belongs to the UPF0145 family.

The chain is UPF0145 protein BCE_1095 from Bacillus cereus (strain ATCC 10987 / NRS 248).